The sequence spans 30 residues: uncharacterized protein (30 aa).

This is an uncharacterized protein from Bacillus subtilis (strain 168).